The chain runs to 214 residues: MVTVSIVEIFLIISLPLLFFSSFADAGDPLQELISFVHGAVLAVPLLLLRSFFLGYYPPDSALVEEQWMRFFLFDYVFPLFCLPFFLFTSRSLERVSLVSGVSALFGAYTSFFFVHVYTQLNDPDLLARVMTLVLYMTNLLQLHAHVSFSMRTRLPLLGLIAALCIFLLMGAFSATVMTLCFFNARTVVYTSMLAGAGGVALLTHFFAVRINVR.

Transmembrane regions (helical) follow at residues 4-23, 35-57, 67-89, 96-118, 128-150, 155-177, and 187-209; these read VSIVEIFLIISLPLLFFSSF, SFVHGAVLAVPLLLLRSFFLGYY, QWMRFFLFDYVFPLFCLPFFLFT, VSLVSGVSALFGAYTSFFFVHVY, ARVMTLVLYMTNLLQLHAHVSFS, LPLLGLIAALCIFLLMGAFSATV, and TVVYTSMLAGAGGVALLTHFFAV.

The protein resides in the cell membrane. This is an uncharacterized protein from Treponema pallidum (strain Nichols).